The chain runs to 67 residues: Protein AaeX (67 aa).

Transmembrane regions (helical) follow at residues 3-23 (LFPV…ELLL) and 47-67 (PALF…RLFV).

The protein belongs to the AaeX family.

The protein localises to the cell membrane. This is Protein AaeX from Escherichia coli O157:H7.